Here is a 101-residue protein sequence, read N- to C-terminus: Anti-sigma factor RshA (101 aa).

A disordered region spans residues 1 to 20; that stretch reads MSETEREDERWTPPIGPIDP. Positions 25, 51, 55, and 58 each coordinate iron-sulfur cluster. Residue Thr96 is modified to Phosphothreonine.

It belongs to the zinc-associated anti-sigma factor (ZAS) superfamily. Interacts with cognate ECF RNA polymerase sigma factor SigH under reducing conditions; the complex is disrupted under oxiding conditions or as temperatures rise. Binding inhibits the interaction of SigH with the RNA polymerase catalytic core. Iron-sulfur cluster is required as a cofactor. Phosphorylated, probably by PknB. Phosphorylation decreases interaction with SigH, probably leading to increased SigH-mediated transcription.

In terms of biological role, a redox-regulated anti-sigma factor for cognate extracytoplasmic function (ECF) sigma factor SigH. ECF sigma factors are held in an inactive form by an anti-sigma factor. Overexpression leads to increased susceptibility to diamide. The chain is Anti-sigma factor RshA (rshA) from Mycolicibacterium smegmatis (strain ATCC 700084 / mc(2)155) (Mycobacterium smegmatis).